Reading from the N-terminus, the 153-residue chain is Calmodulin-like protein 4 (153 aa).

EF-hand domains are found at residues 8–43, 44–79, 81–116, and 117–152; these read DQIN…LGAS, PTPG…QIKQ, DPKK…LGEK, and LTHK…PVRD.

Belongs to the calmodulin family. As to quaternary structure, interacts with MYO7B; the interaction mediates the association of CALML4 with the IMAC/intermicrovillar adhesion complex. Interacts with MYO7A. In terms of tissue distribution, expressed in the small intestine, in both mature enterocytes on the villus surface and immature cells that reside in the crypt stem-cell niche.

It is found in the cell projection. The protein resides in the microvillus. Its function is as follows. As part of the intermicrovillar adhesion complex/IMAC plays a role in epithelial brush border differentiation, controlling microvilli organization and length. Acts as a light chain for MYO7B and is required for efficient targeting of the IMAC to the tips of border brush microvilli. This is Calmodulin-like protein 4 (Calml4) from Mus musculus (Mouse).